Reading from the N-terminus, the 383-residue chain is Histidine decarboxylase (383 aa).

His-120 contributes to the substrate binding site. An N6-(pyridoxal phosphate)lysine modification is found at Lys-233.

It belongs to the group II decarboxylase family. Homotetramer. Requires pyridoxal 5'-phosphate as cofactor.

It carries out the reaction L-histidine + H(+) = histamine + CO2. The chain is Histidine decarboxylase from Acinetobacter baumannii (strain ATCC 17978 / DSM 105126 / CIP 53.77 / LMG 1025 / NCDC KC755 / 5377).